Here is a 1367-residue protein sequence, read N- to C-terminus: Probable serine/threonine-protein kinase pkgA (1367 aa).

Disordered stretches follow at residues 140–164 (IDEN…NKTI), 264–429 (KNGK…LLSR), 456–556 (PTPL…SRKP), and 771–792 (PREE…SDPV). The span at 143–162 (NNNNNNNNNNNNNNNNNKNK) shows a compositional bias: low complexity. The segment covering 271-282 (IKRPSPPLPPPQ) has biased composition (pro residues). A compositionally biased stretch (basic and acidic residues) spans 287–326 (EQQKEQKEQQKEQQKEQQKEQQKEQEQKQQEPQKYVKFEI). Residues 340–381 (ISSSNISNEISKQQQQQQQQQQQQQQQQQQQQQQQQQQQQQQ) are compositionally biased toward low complexity. The span at 399-421 (ANNNILTTPLSSQPTQSLETPST) shows a compositional bias: polar residues. Over residues 506-517 (GEDEEEDEDDDN) the composition is skewed to acidic residues. Residues 531 to 544 (LKNKRPFKKTHVHH) are compositionally biased toward basic residues. The Protein kinase domain maps to 810 to 1236 (FEFIKPITKG…AEEIKSHPFF (427 aa)). Residues 816 to 824 (ITKGGYGKV) and K839 each bind ATP. The active-site Proton acceptor is the D933. 3 disordered regions span residues 971 to 1034 (FSPT…PSNT), 1084 to 1134 (FIPP…HNIH), and 1288 to 1312 (QNQN…TATA). Over residues 979 to 1015 (NNQSSSSSSVSNIGGSNTIGSNISSTNNNNNNNNTTG) the composition is skewed to low complexity. Residues 1025-1034 (NTETPIPSNT) show a composition bias toward polar residues. Low complexity-rich tracts occupy residues 1092–1125 (QQPI…QQTT) and 1294–1312 (SSTI…TATA). The region spanning 1237-1347 (KSINWKTILT…VNFQSLLELN (111 aa)) is the AGC-kinase C-terminal domain.

It belongs to the protein kinase superfamily. AGC Ser/Thr protein kinase family.

The catalysed reaction is L-seryl-[protein] + ATP = O-phospho-L-seryl-[protein] + ADP + H(+). The enzyme catalyses L-threonyl-[protein] + ATP = O-phospho-L-threonyl-[protein] + ADP + H(+). The chain is Probable serine/threonine-protein kinase pkgA (pkgA) from Dictyostelium discoideum (Social amoeba).